The chain runs to 318 residues: MPSIKLNSGYDMPAVGFGCWKVDVDTCSEQIYRAIKTGYRLFDGAEDYANEKLVGAGVKKAIDEGIVKREDLFLTSKLWNNYHHPDNVEKALNRTLSDLQVDYVDLFLIHFPVTFKFVPLEEKYPPGFYCGKGDNFDYEDVPILETWKALEKLVKAGKIRSIGVSNFPGALLLDLLRGATIKPSVLQVEHHPYLQQPRLIEFAQSRGIAVTAYSSFGPQSFVELNQGRALNTSPLFENETIKAIAAKHGKSPAQVLLRWSSQRGIAIIPKSNTVPRLLENKDVNSFDLDEQDFADIAKLDINLRFNDPWDWDKIPIFV.

The Proton donor role is filled by Tyr-48. Residue His-110 coordinates substrate. NAD(+) contacts are provided by residues 165 to 166 (SN), 214 to 223 (SSFGPQSFVE), and 270 to 280 (KSNTVPRLLEN).

It belongs to the aldo/keto reductase family.

It catalyses the reaction xylitol + NAD(+) = D-xylose + NADH + H(+). The catalysed reaction is xylitol + NADP(+) = D-xylose + NADPH + H(+). The protein operates within carbohydrate metabolism; D-xylose degradation. With respect to regulation, NADP(+) is a potent inhibitor of both the NADPH- and NADH-linked xylose reduction, whereas NAD(+) showS strong inhibition only with the NADH-linked reaction. In terms of biological role, reduces D-xylose into xylitol. Has a preference for NADPH, but can also utilize NADH as cosubstrate. This Scheffersomyces stipitis (strain ATCC 58785 / CBS 6054 / NBRC 10063 / NRRL Y-11545) (Yeast) protein is NAD(P)H-dependent D-xylose reductase (XYL1).